A 238-amino-acid polypeptide reads, in one-letter code: Modulator of macroautophagy TMEM150B (238 aa).

The Cytoplasmic portion of the chain corresponds to methionine 1–leucine 8. Residues proline 9 to valine 29 traverse the membrane as a helical segment. The N-linked (GlcNAc...) asparagine glycan is linked to asparagine 30. Over asparagine 30–glutamine 51 the chain is Extracellular. The helical transmembrane segment at serine 52–valine 72 threads the bilayer. At arginine 73 to glutamine 86 the chain is on the cytoplasmic side. The helical transmembrane segment at asparagine 87–phenylalanine 107 threads the bilayer. Over glutamine 108–histidine 116 the chain is Extracellular. A helical membrane pass occupies residues leucine 117–leucine 137. The Cytoplasmic segment spans residues serine 138–arginine 156. Residues leucine 157–histidine 177 traverse the membrane as a helical segment. The Extracellular segment spans residues methionine 178–glutamate 186. A helical transmembrane segment spans residues tryptophan 187–leucine 207. Over arginine 208–leucine 238 the chain is Cytoplasmic.

This sequence belongs to the DRAM/TMEM150 family.

It localises to the cell membrane. The protein resides in the endosome membrane. It is found in the cytoplasmic vesicle. The protein localises to the autophagosome membrane. Modulator of macroautophagy that causes accumulation of autophagosomes under basal conditions and enhances autophagic flux. Represses cell death and promotes long-term clonogenic survival of cells grown in the absence of glucose in a macroautophagy-independent manner. May have some role in extracellular matrix engulfment or growth factor receptor recycling, both of which can modulate cell survival. The protein is Modulator of macroautophagy TMEM150B of Mus musculus (Mouse).